A 351-amino-acid polypeptide reads, in one-letter code: MKNKKRVLIASSLSCAILLLSAATTQANSAHKDSQDQNKKEHVDKSQQKDKRNVTNKDKNSTAPDDIGKNGKITKRTETVYDEKTNILQNLQFDFIDDPTYDKNVLLVKKQGSIHSNLKFESHKEEKNSNWLKYPSEYHVDFQVKRNRKTEILDQLPKNKISTAKVDSTFSYSSGGKFDSTKGIGRTSSNSYSKTISYNQQNYDTIASGKNNNWHVHWSVIANDLKYGGEVKNRNDELLFYRNTRIATVENPELSFASKYRYPALVRSGFNPEFLTYLSNEKSNEKTQFEVTYTRNQDILKNRPGIHYAPPILEKNKDGQRLIVTYEVDWKNKTVKVVDKYSDDNKPYKEG.

An N-terminal signal peptide occupies residues 1–27 (MKNKKRVLIASSLSCAILLLSAATTQA). The tract at residues 27-71 (ANSAHKDSQDQNKKEHVDKSQQKDKRNVTNKDKNSTAPDDIGKNG) is disordered. Basic and acidic residues predominate over residues 30 to 60 (AHKDSQDQNKKEHVDKSQQKDKRNVTNKDKN).

This sequence belongs to the aerolysin family.

This is an uncharacterized protein from Staphylococcus aureus (strain USA300).